Here is a 527-residue protein sequence, read N- to C-terminus: Type-2 serine--tRNA ligase (527 aa).

Position 317 (A317) interacts with L-serine. C319 is a binding site for Zn(2+). R349 contacts L-serine. ATP contacts are provided by residues 349-351 (RWE) and 360-361 (RV). Residue 366 to 368 (RIE) coordinates L-serine. 2 residues coordinate Zn(2+): E368 and C478. An ATP-binding site is contributed by R485.

It belongs to the class-II aminoacyl-tRNA synthetase family. Type-2 seryl-tRNA synthetase subfamily. In terms of assembly, homodimer. Requires Zn(2+) as cofactor.

The protein localises to the cytoplasm. The catalysed reaction is tRNA(Ser) + L-serine + ATP = L-seryl-tRNA(Ser) + AMP + diphosphate + H(+). The enzyme catalyses tRNA(Sec) + L-serine + ATP = L-seryl-tRNA(Sec) + AMP + diphosphate + H(+). It functions in the pathway aminoacyl-tRNA biosynthesis; selenocysteinyl-tRNA(Sec) biosynthesis; L-seryl-tRNA(Sec) from L-serine and tRNA(Sec): step 1/1. Catalyzes the attachment of serine to tRNA(Ser). Is also able to aminoacylate tRNA(Sec) with serine, to form the misacylated tRNA L-seryl-tRNA(Sec), which will be further converted into selenocysteinyl-tRNA(Sec). The chain is Type-2 serine--tRNA ligase from Methanopyrus kandleri (strain AV19 / DSM 6324 / JCM 9639 / NBRC 100938).